The following is a 698-amino-acid chain: Gametogenetin-binding protein 2 (698 aa).

Residues 555–575 are disordered; the sequence is CMADPGNRETSGNTTHTEFHR.

It is found in the cytoplasm. Its function is as follows. May be involved in spermatogenesis. The polypeptide is Gametogenetin-binding protein 2 (GGNBP2) (Gallus gallus (Chicken)).